A 487-amino-acid polypeptide reads, in one-letter code: UDP-N-acetylmuramoyl-L-alanyl-D-glutamate--2,6-diaminopimelate ligase (487 aa).

Residues Leu23 and Ser25 each contribute to the UDP-N-acetyl-alpha-D-muramoyl-L-alanyl-D-glutamate site. ATP is bound at residue 108-114; it reads GTNGKTS. UDP-N-acetyl-alpha-D-muramoyl-L-alanyl-D-glutamate-binding positions include 150-151, Ser177, Gln183, and Arg185; that span reads TT. Position 217 is an N6-carboxylysine (Lys217). Meso-2,6-diaminopimelate-binding positions include Arg378, 402-405, Gly453, and Glu457; that span reads DNPR. The short motif at 402 to 405 is the Meso-diaminopimelate recognition motif element; it reads DNPR.

It belongs to the MurCDEF family. MurE subfamily. It depends on Mg(2+) as a cofactor. Post-translationally, carboxylation is probably crucial for Mg(2+) binding and, consequently, for the gamma-phosphate positioning of ATP.

It is found in the cytoplasm. It carries out the reaction UDP-N-acetyl-alpha-D-muramoyl-L-alanyl-D-glutamate + meso-2,6-diaminopimelate + ATP = UDP-N-acetyl-alpha-D-muramoyl-L-alanyl-gamma-D-glutamyl-meso-2,6-diaminopimelate + ADP + phosphate + H(+). The protein operates within cell wall biogenesis; peptidoglycan biosynthesis. Catalyzes the addition of meso-diaminopimelic acid to the nucleotide precursor UDP-N-acetylmuramoyl-L-alanyl-D-glutamate (UMAG) in the biosynthesis of bacterial cell-wall peptidoglycan. The protein is UDP-N-acetylmuramoyl-L-alanyl-D-glutamate--2,6-diaminopimelate ligase of Pseudomonas syringae pv. tomato (strain ATCC BAA-871 / DC3000).